The following is a 236-amino-acid chain: 2-C-methyl-D-erythritol 4-phosphate cytidylyltransferase (236 aa).

This sequence belongs to the IspD/TarI cytidylyltransferase family. IspD subfamily. Homodimer.

It catalyses the reaction 2-C-methyl-D-erythritol 4-phosphate + CTP + H(+) = 4-CDP-2-C-methyl-D-erythritol + diphosphate. Its pathway is isoprenoid biosynthesis; isopentenyl diphosphate biosynthesis via DXP pathway; isopentenyl diphosphate from 1-deoxy-D-xylulose 5-phosphate: step 2/6. Its function is as follows. Catalyzes the formation of 4-diphosphocytidyl-2-C-methyl-D-erythritol from CTP and 2-C-methyl-D-erythritol 4-phosphate (MEP). This is 2-C-methyl-D-erythritol 4-phosphate cytidylyltransferase from Escherichia coli O127:H6 (strain E2348/69 / EPEC).